The chain runs to 164 residues: 2-C-methyl-D-erythritol 2,4-cyclodiphosphate synthase (164 aa).

Asp8 and His10 together coordinate a divalent metal cation. 4-CDP-2-C-methyl-D-erythritol 2-phosphate is bound by residues 8 to 10 and 34 to 35; these read DVH and HS. His42 provides a ligand contact to a divalent metal cation. 4-CDP-2-C-methyl-D-erythritol 2-phosphate contacts are provided by residues 56-58, 132-135, Phe139, and Lys142; these read DIG and TTEE.

The protein belongs to the IspF family. Homotrimer. A divalent metal cation is required as a cofactor.

The enzyme catalyses 4-CDP-2-C-methyl-D-erythritol 2-phosphate = 2-C-methyl-D-erythritol 2,4-cyclic diphosphate + CMP. It participates in isoprenoid biosynthesis; isopentenyl diphosphate biosynthesis via DXP pathway; isopentenyl diphosphate from 1-deoxy-D-xylulose 5-phosphate: step 4/6. In terms of biological role, involved in the biosynthesis of isopentenyl diphosphate (IPP) and dimethylallyl diphosphate (DMAPP), two major building blocks of isoprenoid compounds. Catalyzes the conversion of 4-diphosphocytidyl-2-C-methyl-D-erythritol 2-phosphate (CDP-ME2P) to 2-C-methyl-D-erythritol 2,4-cyclodiphosphate (ME-CPP) with a corresponding release of cytidine 5-monophosphate (CMP). This Clostridium kluyveri (strain NBRC 12016) protein is 2-C-methyl-D-erythritol 2,4-cyclodiphosphate synthase.